The chain runs to 320 residues: ATP-dependent 6-phosphofructokinase (320 aa).

Position 11 (Gly-11) interacts with ATP. Position 21–25 (21–25 (RAVTK)) interacts with ADP. Residues 72 to 73 (RF) and 102 to 105 (GDGS) each bind ATP. Residue Asp-103 coordinates Mg(2+). Position 125–127 (125–127 (TID)) interacts with substrate. Asp-127 serves as the catalytic Proton acceptor. Arg-154 is an ADP binding site. Substrate-binding positions include Arg-162 and 169 to 171 (MGR). ADP-binding positions include 185–187 (GAD) and 213–215 (KDH). Substrate-binding positions include Glu-222, Arg-243, and 249–252 (HMQR).

It belongs to the phosphofructokinase type A (PFKA) family. ATP-dependent PFK group I subfamily. Prokaryotic clade 'B1' sub-subfamily. Homotetramer. Requires Mg(2+) as cofactor.

Its subcellular location is the cytoplasm. It carries out the reaction beta-D-fructose 6-phosphate + ATP = beta-D-fructose 1,6-bisphosphate + ADP + H(+). It participates in carbohydrate degradation; glycolysis; D-glyceraldehyde 3-phosphate and glycerone phosphate from D-glucose: step 3/4. Allosterically activated by ADP and other diphosphonucleosides, and allosterically inhibited by phosphoenolpyruvate. Catalyzes the phosphorylation of D-fructose 6-phosphate to fructose 1,6-bisphosphate by ATP, the first committing step of glycolysis. This chain is ATP-dependent 6-phosphofructokinase, found in Lactobacillus acidophilus (strain ATCC 700396 / NCK56 / N2 / NCFM).